We begin with the raw amino-acid sequence, 853 residues long: DNA mismatch repair protein MutS (853 aa).

Residue 613-620 (GPNMGGKS) coordinates ATP.

The protein belongs to the DNA mismatch repair MutS family.

This protein is involved in the repair of mismatches in DNA. It is possible that it carries out the mismatch recognition step. This protein has a weak ATPase activity. The chain is DNA mismatch repair protein MutS from Vibrio atlanticus (strain LGP32) (Vibrio splendidus (strain Mel32)).